Reading from the N-terminus, the 411-residue chain is Tyrosine--tRNA ligase (411 aa).

Residue Y36 participates in L-tyrosine binding. Positions 41-50 match the 'HIGH' region motif; the sequence is PTADSLHVGH. Y172 and Q176 together coordinate L-tyrosine. The 'KMSKS' region signature appears at 232–236; the sequence is KMGKT. Residue K235 coordinates ATP. The 66-residue stretch at 344 to 409 folds into the S4 RNA-binding domain; the sequence is YSIANILVVT…GKKNHIKVII (66 aa).

The protein belongs to the class-I aminoacyl-tRNA synthetase family. TyrS type 1 subfamily. Homodimer.

The protein localises to the cytoplasm. The enzyme catalyses tRNA(Tyr) + L-tyrosine + ATP = L-tyrosyl-tRNA(Tyr) + AMP + diphosphate + H(+). Catalyzes the attachment of tyrosine to tRNA(Tyr) in a two-step reaction: tyrosine is first activated by ATP to form Tyr-AMP and then transferred to the acceptor end of tRNA(Tyr). In Malacoplasma penetrans (strain HF-2) (Mycoplasma penetrans), this protein is Tyrosine--tRNA ligase.